The chain runs to 298 residues: MTVEEVSDGSVWSREDDIAFERALANNTDESEERWEKIAADVPGKSVEQIKEHYELLVEDVTRIESGCVPLPAYGSPEGSNGHAGDEGASSKKGGNSHAGESNQAGKSKSDQERRKGIAWTEDEHRLFLLGLDKYGKGDWRSISRNFVVTRTPTQVASHAQKYFIRLNSMNKDRRRSSIHDITSVGNADVSTPQGPITGQNNSNNNNNNNNNNSSPAVAGGGNKSAKQAVSQAPPGPPMYGTPAIGQPAVGTPVNLPAPPHMAYGVHAAPVPGSVVPGAAMNIGQMPYTMPRTPTAHR.

The 56-residue stretch at 7-62 (SDGSVWSREDDIAFERALANNTDESEERWEKIAADVPGKSVEQIKEHYELLVEDVT) folds into the SANT domain. Positions 68 to 118 (CVPLPAYGSPEGSNGHAGDEGASSKKGGNSHAGESNQAGKSKSDQERRKGI) are disordered. Positions 108–118 (SKSDQERRKGI) are enriched in basic and acidic residues. The HTH myb-type domain maps to 111 to 168 (DQERRKGIAWTEDEHRLFLLGLDKYGKGDWRSISRNFVVTRTPTQVASHAQKYFIRLN). The segment at residues 140-164 (WRSISRNFVVTRTPTQVASHAQKYF) is a DNA-binding region (H-T-H motif). The segment covering 182–200 (ITSVGNADVSTPQGPITGQ) has biased composition (polar residues). Residues 182–245 (ITSVGNADVS…GPPMYGTPAI (64 aa)) form a disordered region. Residues 201 to 215 (NNSNNNNNNNNNNSS) show a composition bias toward low complexity.

As to expression, expressed in young seedlings, developing leaves, sepals and trichomes.

It is found in the nucleus. Functionally, transcription activator that coordinates abscisic acid (ABA) biosynthesis and signaling-related genes via binding to the specific promoter motif 5'-(A/T)AACCAT-3'. Represses ABA-mediated salt (e.g. NaCl and KCl) stress tolerance. Regulates leaf shape and promotes vegetative growth. The chain is Transcription factor SRM1 from Arabidopsis thaliana (Mouse-ear cress).